A 260-amino-acid polypeptide reads, in one-letter code: Flap endonuclease Xni (260 aa).

A Mg(2+)-binding site is contributed by Asp109. In terms of domain architecture, 5'-3' exonuclease spans 165–259 (VKPSQLADYW…DIRFTGPNKA (95 aa)). K(+) contacts are provided by Leu176, Pro185, Val187, and Ile190. The segment at 189–194 (GIGPKA) is interaction with DNA.

It belongs to the Xni family. Requires Mg(2+) as cofactor. K(+) serves as cofactor.

Has flap endonuclease activity. During DNA replication, flap endonucleases cleave the 5'-overhanging flap structure that is generated by displacement synthesis when DNA polymerase encounters the 5'-end of a downstream Okazaki fragment. This Vibrio parahaemolyticus serotype O3:K6 (strain RIMD 2210633) protein is Flap endonuclease Xni.